The following is a 175-amino-acid chain: Adenine phosphoribosyltransferase (175 aa).

This sequence belongs to the purine/pyrimidine phosphoribosyltransferase family. Homodimer.

It is found in the cytoplasm. The enzyme catalyses AMP + diphosphate = 5-phospho-alpha-D-ribose 1-diphosphate + adenine. Its pathway is purine metabolism; AMP biosynthesis via salvage pathway; AMP from adenine: step 1/1. Functionally, catalyzes a salvage reaction resulting in the formation of AMP, that is energically less costly than de novo synthesis. In Synechococcus sp. (strain JA-3-3Ab) (Cyanobacteria bacterium Yellowstone A-Prime), this protein is Adenine phosphoribosyltransferase.